A 338-amino-acid chain; its full sequence is Ketol-acid reductoisomerase (NADP(+)) (338 aa).

Residues 1–181 (MKVYYDSDAD…GGGRAGIIET (181 aa)) enclose the KARI N-terminal Rossmann domain. NADP(+) contacts are provided by residues 24 to 27 (YGSQ), arginine 47, serine 50, serine 52, and 82 to 85 (DEHQ). Histidine 107 is a catalytic residue. Glycine 133 provides a ligand contact to NADP(+). Residues 182-327 (SFKEETETDL…AKLRAMMPWI (146 aa)) form the KARI C-terminal knotted domain. Residues aspartate 190, glutamate 194, glutamate 226, and glutamate 230 each coordinate Mg(2+). Residue serine 251 participates in substrate binding.

It belongs to the ketol-acid reductoisomerase family. Mg(2+) is required as a cofactor.

It carries out the reaction (2R)-2,3-dihydroxy-3-methylbutanoate + NADP(+) = (2S)-2-acetolactate + NADPH + H(+). The enzyme catalyses (2R,3R)-2,3-dihydroxy-3-methylpentanoate + NADP(+) = (S)-2-ethyl-2-hydroxy-3-oxobutanoate + NADPH + H(+). It functions in the pathway amino-acid biosynthesis; L-isoleucine biosynthesis; L-isoleucine from 2-oxobutanoate: step 2/4. Its pathway is amino-acid biosynthesis; L-valine biosynthesis; L-valine from pyruvate: step 2/4. Involved in the biosynthesis of branched-chain amino acids (BCAA). Catalyzes an alkyl-migration followed by a ketol-acid reduction of (S)-2-acetolactate (S2AL) to yield (R)-2,3-dihydroxy-isovalerate. In the isomerase reaction, S2AL is rearranged via a Mg-dependent methyl migration to produce 3-hydroxy-3-methyl-2-ketobutyrate (HMKB). In the reductase reaction, this 2-ketoacid undergoes a metal-dependent reduction by NADPH to yield (R)-2,3-dihydroxy-isovalerate. The protein is Ketol-acid reductoisomerase (NADP(+)) of Magnetococcus marinus (strain ATCC BAA-1437 / JCM 17883 / MC-1).